Consider the following 286-residue polypeptide: MRYFRLCIISLLATLPLRVHAGPQPLEQIKLSESQLSGSVGMIEMDLARPGTLTAWRADERFPMMSTFKVVLCGAGLARVDAGDEQLERKIHYRRQDLVDYSPVSEKHLADGMTVGELCAAAITMSDNSAANLLLPAVGGPAGLTAFLRQIGDNVTRLDRWETELNEALPGDARDTTTARSMAATLRKLLTSQRLSARSQRQLLQWMVDDRVAGRLIRSVLPAGWFIADKTGAGERGARGIVALLGPNNKAERIVVIYLRDTPASMAERNQQIAGIAGALIEHWQR.

A signal peptide spans 1–21 (MRYFRLCIISLLATLPLRVHA). Ser-66 serves as the catalytic Acyl-ester intermediate. Cys-73 and Cys-119 are joined by a disulfide. Glu-164 acts as the Proton acceptor in catalysis. 230–232 (KTG) lines the substrate pocket.

Belongs to the class-A beta-lactamase family.

The enzyme catalyses a beta-lactam + H2O = a substituted beta-amino acid. The protein is Beta-lactamase Ohio-1 of Enterobacter cloacae.